We begin with the raw amino-acid sequence, 423 residues long: Imidazolonepropionase (423 aa).

Residues His78 and His80 each contribute to the Fe(3+) site. Residues His78 and His80 each contribute to the Zn(2+) site. Residues Arg87, Tyr150, and His183 each coordinate 4-imidazolone-5-propanoate. Residue Tyr150 coordinates N-formimidoyl-L-glutamate. His247 provides a ligand contact to Fe(3+). His247 contributes to the Zn(2+) binding site. Glu250 contributes to the 4-imidazolone-5-propanoate binding site. Asp322 provides a ligand contact to Fe(3+). Asp322 is a binding site for Zn(2+). N-formimidoyl-L-glutamate contacts are provided by Asn324 and Gly326. Residue Ser327 participates in 4-imidazolone-5-propanoate binding.

It belongs to the metallo-dependent hydrolases superfamily. HutI family. The cofactor is Zn(2+). Fe(3+) is required as a cofactor.

It is found in the cytoplasm. The enzyme catalyses 4-imidazolone-5-propanoate + H2O = N-formimidoyl-L-glutamate. It participates in amino-acid degradation; L-histidine degradation into L-glutamate; N-formimidoyl-L-glutamate from L-histidine: step 3/3. Catalyzes the hydrolytic cleavage of the carbon-nitrogen bond in imidazolone-5-propanoate to yield N-formimidoyl-L-glutamate. It is the third step in the universal histidine degradation pathway. In Bacillus mycoides (strain KBAB4) (Bacillus weihenstephanensis), this protein is Imidazolonepropionase.